Consider the following 366-residue polypeptide: 3-dehydroquinate synthase (366 aa).

Residues 71–76 (DGEQYK), 105–109 (GVIGD), 129–130 (TT), lysine 142, lysine 151, and 169–172 (CLQT) each bind NAD(+). Glutamate 184, histidine 248, and histidine 265 together coordinate Zn(2+).

This sequence belongs to the sugar phosphate cyclases superfamily. Dehydroquinate synthase family. Requires NAD(+) as cofactor. Co(2+) is required as a cofactor. The cofactor is Zn(2+).

Its subcellular location is the cytoplasm. It carries out the reaction 7-phospho-2-dehydro-3-deoxy-D-arabino-heptonate = 3-dehydroquinate + phosphate. It functions in the pathway metabolic intermediate biosynthesis; chorismate biosynthesis; chorismate from D-erythrose 4-phosphate and phosphoenolpyruvate: step 2/7. Catalyzes the conversion of 3-deoxy-D-arabino-heptulosonate 7-phosphate (DAHP) to dehydroquinate (DHQ). This chain is 3-dehydroquinate synthase, found in Photorhabdus laumondii subsp. laumondii (strain DSM 15139 / CIP 105565 / TT01) (Photorhabdus luminescens subsp. laumondii).